Reading from the N-terminus, the 97-residue chain is UPF0729 protein GD16342 (97 aa).

The tract at residues 64 to 97 (KPEKASVGPAEESQNPPLNAIAAETEVDESKKEI) is disordered. At Ser69 the chain carries Phosphoserine.

Belongs to the UPF0729 family.

The sequence is that of UPF0729 protein GD16342 from Drosophila simulans (Fruit fly).